The following is a 176-amino-acid chain: ATP-dependent protease subunit HslV (176 aa).

Residue threonine 6 is part of the active site. Na(+) is bound by residues serine 161, cysteine 164, and threonine 167.

The protein belongs to the peptidase T1B family. HslV subfamily. A double ring-shaped homohexamer of HslV is capped on each side by a ring-shaped HslU homohexamer. The assembly of the HslU/HslV complex is dependent on binding of ATP.

It localises to the cytoplasm. The catalysed reaction is ATP-dependent cleavage of peptide bonds with broad specificity.. With respect to regulation, allosterically activated by HslU binding. In terms of biological role, protease subunit of a proteasome-like degradation complex believed to be a general protein degrading machinery. This is ATP-dependent protease subunit HslV from Pseudothermotoga lettingae (strain ATCC BAA-301 / DSM 14385 / NBRC 107922 / TMO) (Thermotoga lettingae).